Reading from the N-terminus, the 94-residue chain is Protein RESPONSE TO LOW SULFUR 1 (94 aa).

A coiled-coil region spans residues 8-35; sequence VTVAAEEMDELRRRNIELSREVAEMKTE.

This Arabidopsis thaliana (Mouse-ear cress) protein is Protein RESPONSE TO LOW SULFUR 1.